Here is a 700-residue protein sequence, read N- to C-terminus: Mitosis inducer protein blt1 (700 aa).

Polar residues-rich tracts occupy residues 1-11 (MSKSAFTSKSQ) and 43-53 (PRSTALPNLSN). Disordered regions lie at residues 1 to 53 (MSKS…NLSN) and 266 to 293 (TNNRKPVGSDGSNSNFNGGEEQMDSKDQ). Low complexity predominate over residues 273-284 (GSDGSNSNFNGG). Residues 496 to 575 (SVALDDHNRQ…LNMLQKLSMQ (80 aa)) adopt a coiled-coil conformation. Disordered regions lie at residues 634 to 659 (FSSFSGSSSKLPVRPSTALTDKRKPS) and 671 to 700 (SSGSPEKKHVITSSDAGHQRSKSRSFSSKM). S636 carries the post-translational modification Phosphoserine.

In terms of assembly, interacts with cdr2, mid1 and sad1.

It localises to the cytoplasm. Its subcellular location is the cytoskeleton. Functionally, at the onset of mitosis, forms a medial ring structure before the arrangement of the medial actin ring. Essential for the central positioning of the division septum before the cell divides. The sequence is that of Mitosis inducer protein blt1 (blt1) from Schizosaccharomyces pombe (strain 972 / ATCC 24843) (Fission yeast).